The chain runs to 94 residues: Evasin P1104 (94 aa).

An N-terminal signal peptide occupies residues 1-28 (MASNLFTIFQLAGFVAIVFIVNLHSVSA). 3 disulfide bridges follow: Cys-48-Cys-66, Cys-52-Cys-68, and Cys-62-Cys-79. A glycan (N-linked (GlcNAc...) asparagine) is linked at Asn-51.

It localises to the secreted. Functionally, salivary chemokine-binding protein which binds to host chemokines CXCL1, CXCL2, CXCL3, CXCL5, CXCL6, CXCL12 and CXCL13. This Ixodes ricinus (Common tick) protein is Evasin P1104.